A 109-amino-acid chain; its full sequence is Antifungal protein ginkbilobin-like protein (109 aa).

Residues Thr-4–Phe-109 enclose the Gnk2-homologous domain. Cystine bridges form between Cys-11–Cys-87, Cys-63–Cys-72, and Cys-75–Cys-100. Alpha-D-mannopyranose is bound at residue Asn-12. Alpha-D-mannopyranose-binding residues include Arg-94 and Glu-105.

Its function is as follows. Exerts antifungal activity through its carbohydrate-binding specificity. The chain is Antifungal protein ginkbilobin-like protein from Picea abies (Norway spruce).